The following is a 199-amino-acid chain: Large ribosomal subunit protein bL25 (199 aa).

Belongs to the bacterial ribosomal protein bL25 family. CTC subfamily. As to quaternary structure, part of the 50S ribosomal subunit; part of the 5S rRNA/L5/L18/L25 subcomplex. Contacts the 5S rRNA. Binds to the 5S rRNA independently of L5 and L18.

In terms of biological role, this is one of the proteins that binds to the 5S RNA in the ribosome where it forms part of the central protuberance. In Caulobacter sp. (strain K31), this protein is Large ribosomal subunit protein bL25.